Consider the following 300-residue polypeptide: Acetylglutamate kinase (300 aa).

Substrate is bound by residues 68–69, arginine 90, and asparagine 194; that span reads GG.

It belongs to the acetylglutamate kinase family. ArgB subfamily.

It localises to the cytoplasm. The catalysed reaction is N-acetyl-L-glutamate + ATP = N-acetyl-L-glutamyl 5-phosphate + ADP. Its pathway is amino-acid biosynthesis; L-arginine biosynthesis; N(2)-acetyl-L-ornithine from L-glutamate: step 2/4. Functionally, catalyzes the ATP-dependent phosphorylation of N-acetyl-L-glutamate. The chain is Acetylglutamate kinase from Methanocaldococcus jannaschii (strain ATCC 43067 / DSM 2661 / JAL-1 / JCM 10045 / NBRC 100440) (Methanococcus jannaschii).